An 894-amino-acid chain; its full sequence is Alpha-actinin-2 (894 aa).

The segment at 1–254 (MNQIEPGVQY…IMTYVSCFYH (254 aa)) is actin-binding. Calponin-homology (CH) domains follow at residues 38–142 (KQQR…LRFA) and 151–257 (TSAK…HAFA). The residue at position 237 (T237) is a Phosphothreonine. Spectrin repeat units follow at residues 281–391 (RLME…WLLN), 401–506 (HLAE…ALER), 516–627 (QLHL…SLQE), and 637–740 (RLRR…EVET). 2 consecutive EF-hand domains span residues 753 to 788 (EQMNEFRASFNHFDRRKNGLMDHEDFRACLISMGYD) and 789 to 824 (LGEAEFARIMTLVDPNGQGTVTFQSFIDFMTRETAD). Positions 766, 770, 777, 802, 804, and 808 each coordinate Ca(2+).

Belongs to the alpha-actinin family. In terms of assembly, homodimer; antiparallel. Also forms heterodimers with ACTN3. Interacts with ADAM12, MYOZ1, MYOZ2 and MYOZ3. Interacts via its C-terminal region with the LDB3 PDZ domain. Interacts with XIRP2. Interacts with DST (via N-terminus). Interacts with PARVB. Interacts with SYNPO2. Post-translationally, ubiquitinated by FBXL22, leading to proteasomal degradation.

The protein resides in the cytoplasm. Its subcellular location is the myofibril. The protein localises to the sarcomere. It is found in the z line. F-actin cross-linking protein which is thought to anchor actin to a variety of intracellular structures. This is a bundling protein. The polypeptide is Alpha-actinin-2 (Actn2) (Mus musculus (Mouse)).